The primary structure comprises 321 residues: MDNPSSDPLPSTLSGEEEKPLALLPPVPRGRRGRPPGGATTSNRTLKSSLPRKRGRPPRSEQETPLTAPVDSGGSSDLLLIDDQGVPYTVPEGSAADGPQGSGSKRAPHFCPVCLRAFPYLSDLERHSISHSELKPHVCKDCGKTFKRSSHLRRHCNIHAGLRPFRCVLCPRRFREAGELAHHHRIHSGERPYQCPSCRVRFTEANTLRRHYKRKHPELVGMPVRLCPPNPRTQPLWDDDEGIPVQEGVQEESPEGKEPTWPISSTTSPLSGFTAGGSAGAGRGQEGQDTLVSGGIPTMEGDQKQGPKPLGPGAIGHPPVD.

Polar residues-rich tracts occupy residues 1–14 (MDNP…STLS) and 39–48 (ATTSNRTLKS). 2 disordered regions span residues 1 to 80 (MDNP…DLLL) and 86 to 105 (VPYT…SGSK). A DNA-binding region (a.T hook) is located at residues 49–59 (SLPRKRGRPPR). 4 C2H2-type zinc fingers span residues 109–131 (HFCP…SISH), 137–159 (HVCK…CNIH), 165–187 (FRCV…HRIH), and 193–216 (YQCP…KRKH). Residues 248 to 321 (GVQEESPEGK…PGAIGHPPVD (74 aa)) are disordered. The span at 262 to 271 (PISSTTSPLS) shows a compositional bias: polar residues. Gly residues predominate over residues 274–285 (TAGGSAGAGRGQ).

Belongs to the krueppel C2H2-type zinc-finger protein family.

It is found in the nucleus. May be involved in transcriptional regulation. This chain is Zinc finger protein 524 (Znf524), found in Mus musculus (Mouse).